Here is a 564-residue protein sequence, read N- to C-terminus: Keratin, type II cytoskeletal 6B (564 aa).

Low complexity predominate over residues 1–11 (MASTSTTIRSH). The tract at residues 1–23 (MASTSTTIRSHSSSRRGFSANSA) is disordered. Position 2 is an N-acetylalanine (Ala-2). The segment at 2–162 (ASTSTTIRSH…DPAIQRVRAE (161 aa)) is head. The segment at 163-198 (EREQIKTLNNKFASFIDKVRFLEQQNKVLDTKWTLL) is coil 1A. Residues 163 to 476 (EREQIKTLNN…KLLEGEECRL (314 aa)) enclose the IF rod domain. Positions 199-217 (QEQGTKTVRQNLEPLFEQY) are linker 1. Residues 218-309 (INNLRRQLDN…ALYDAELSQM (92 aa)) are coil 1B. A linker 12 region spans residues 310 to 333 (QTHISDTSVVLSMDNNRNLDLDSI). Residues 334-472 (IAEVKAQYEE…ATYRKLLEGE (139 aa)) form a coil 2 region. The segment at 473 to 564 (ECRLNGEGVG…SSSSRKSYKH (92 aa)) is tail. Residues 533–564 (RATGGGLSSVGGGSSTIKYTTTSSSSRKSYKH) form a disordered region. Residues 534–546 (ATGGGLSSVGGGS) show a composition bias toward gly residues. Over residues 547–564 (STIKYTTTSSSSRKSYKH) the composition is skewed to low complexity.

Belongs to the intermediate filament family. Heterodimer of a type I and a type II keratin. KRT6 isomers associate with KRT16 and/or KRT17. In terms of tissue distribution, constitutively expressed in distinct types of epithelia such as those in oral mucosa, esophagus, papillae of tongue and hair follicle outer root sheath.

The protein is Keratin, type II cytoskeletal 6B (KRT6B) of Homo sapiens (Human).